Consider the following 107-residue polypeptide: Cytochrome c oxidase assembly protein COX16 homolog, mitochondrial (107 aa).

Residues 1-14 (MFGYAVRRALRKSK) lie on the Mitochondrial matrix side of the membrane. The chain crosses the membrane as a helical span at residues 15 to 37 (TLRYGVPMLLLIVGGSFGLREFS). At 38–107 (QIRYDAVKIK…PEILKTNKTT (70 aa)) the chain is on the mitochondrial intermembrane side. Residues 80–107 (NIRGPRPWEDPDLLQGRNPEILKTNKTT) are disordered.

It belongs to the COX16 family. Associates with the MITRAC complex. Interacts with MT-CO2/COX; specifically interacts with newly synthesized MT-CO2/COX. Interacts with SCO1, SCO2 and COA6.

Its subcellular location is the mitochondrion inner membrane. Its function is as follows. Required for the assembly of the mitochondrial respiratory chain complex IV (CIV), also known as cytochrome c oxidase. Promotes the insertion of copper into the active site of cytochrome c oxidase subunit II (MT-CO2/COX2). Interacts specifically with newly synthesized MT-CO2/COX and its copper center-forming metallochaperones SCO1, SCO2 and COA6. Probably facilitates MT-CO2/COX2 association with the MITRAC assembly intermediate containing MT-CO1/COX1, thereby participating in merging the MT-CO1/COX1 and MT-CO2/COX2 assembly lines. The chain is Cytochrome c oxidase assembly protein COX16 homolog, mitochondrial from Bos taurus (Bovine).